The sequence spans 561 residues: SH3 domain-binding protein 2 (561 aa).

Positions 26–130 (GVAKAGYLHK…WMALLRREIG (105 aa)) constitute a PH domain. 2 disordered regions span residues 160–316 (VDIS…GACS) and 333–451 (KLKS…YEKV). A compositionally biased stretch (acidic residues) spans 170-188 (DNEDYEHDDEDDSYLEPDS). 2 positions are modified to phosphotyrosine; by SYK: Y174 and Y183. The short motif at 201–210 (PPAYPPPPVP) is the SH3-binding element. 2 stretches are compositionally biased toward pro residues: residues 202-213 (PAYPPPPVPTPR) and 233-242 (PLLPPPPPKH). Residues 252–266 (EDSKRDPLCPRRAEP) show a composition bias toward basic and acidic residues. S278 bears the Phosphoserine mark. Residues 342 to 354 (RGPPTSEPPPVPA) show a composition bias toward pro residues. Phosphoserine is present on residues S416 and S427. Y448 carries the phosphotyrosine; by SYK modification. Residues 457-555 (VFVNTTESCE…HQSLLLRHPY (99 aa)) form the SH2 domain.

In terms of processing, phosphorylated. Phosphorylation at Tyr-448 may stimulate the activity of the LYN kinase. As to expression, expressed in a variety of tissues including lung, liver, skeletal muscle, kidney and pancreas.

Functionally, binds differentially to the SH3 domains of certain proteins of signal transduction pathways. Binds to phosphatidylinositols; linking the hemopoietic tyrosine kinase fes to the cytoplasmic membrane in a phosphorylation dependent mechanism. The sequence is that of SH3 domain-binding protein 2 (SH3BP2) from Homo sapiens (Human).